The chain runs to 241 residues: UDP-2,3-diacylglucosamine hydrolase (241 aa).

Positions 8, 10, 41, 79, and 114 each coordinate Mn(2+). A substrate-binding site is contributed by 79-80 (NR). Substrate-binding residues include D122, S160, K167, and H195. Residues H195 and H197 each contribute to the Mn(2+) site.

Belongs to the LpxH family. Mn(2+) is required as a cofactor.

The protein resides in the cell inner membrane. It carries out the reaction UDP-2-N,3-O-bis[(3R)-3-hydroxytetradecanoyl]-alpha-D-glucosamine + H2O = 2-N,3-O-bis[(3R)-3-hydroxytetradecanoyl]-alpha-D-glucosaminyl 1-phosphate + UMP + 2 H(+). It functions in the pathway glycolipid biosynthesis; lipid IV(A) biosynthesis; lipid IV(A) from (3R)-3-hydroxytetradecanoyl-[acyl-carrier-protein] and UDP-N-acetyl-alpha-D-glucosamine: step 4/6. Hydrolyzes the pyrophosphate bond of UDP-2,3-diacylglucosamine to yield 2,3-diacylglucosamine 1-phosphate (lipid X) and UMP by catalyzing the attack of water at the alpha-P atom. Involved in the biosynthesis of lipid A, a phosphorylated glycolipid that anchors the lipopolysaccharide to the outer membrane of the cell. The sequence is that of UDP-2,3-diacylglucosamine hydrolase from Azotobacter vinelandii (strain DJ / ATCC BAA-1303).